Consider the following 688-residue polypeptide: UvrABC system protein B (688 aa).

The 384-residue stretch at 31-414 (GRITAGETDV…LGIADGVVEQ (384 aa)) folds into the Helicase ATP-binding domain. 44 to 51 (GATGTGKS) serves as a coordination point for ATP. The short motif at 97–120 (YYDYYQPEAYVPQTDTFIEKDSSI) is the Beta-hairpin element. Residues 434-600 (QIDDLLEEIR…PLRKRIADIT (167 aa)) enclose the Helicase C-terminal domain. The disordered stretch occupies residues 614-633 (LAGRDQKRKSPTPSLRSGGI). A UVR domain is found at 642 to 677 (ESLIADLNAQMLAAAGELKFELAARLRDELSDLKRD).

Belongs to the UvrB family. Forms a heterotetramer with UvrA during the search for lesions. Interacts with UvrC in an incision complex.

It localises to the cytoplasm. Its function is as follows. The UvrABC repair system catalyzes the recognition and processing of DNA lesions. A damage recognition complex composed of 2 UvrA and 2 UvrB subunits scans DNA for abnormalities. Upon binding of the UvrA(2)B(2) complex to a putative damaged site, the DNA wraps around one UvrB monomer. DNA wrap is dependent on ATP binding by UvrB and probably causes local melting of the DNA helix, facilitating insertion of UvrB beta-hairpin between the DNA strands. Then UvrB probes one DNA strand for the presence of a lesion. If a lesion is found the UvrA subunits dissociate and the UvrB-DNA preincision complex is formed. This complex is subsequently bound by UvrC and the second UvrB is released. If no lesion is found, the DNA wraps around the other UvrB subunit that will check the other stand for damage. The sequence is that of UvrABC system protein B from Leifsonia xyli subsp. xyli (strain CTCB07).